Consider the following 382-residue polypeptide: MSNATNNTLGSLLPQLEAAANSNSLYGGMVPNLRFNITMIVIWGILLTIHVVQLLMRQYWFSIAFICTGILEVLGYIGRTWSHSNVADMDAFLLNMICLTIAPVFTMGGIYYQLAKLIEVYGHRFSLLPSPMAYSFIFICSDIVSLVVQAVGGGLCGVAVTDGTSTTTGNHVFIAGLAIQVASMAIFLMLWFHFLFRIYISVRWEHINSRPISLSLLKISQTEVDYLYREKFHFLRLEPKRWVFHYFNLAMTVAVLTIFTRCCYRLAELVVGWDGYLITHEWYFIILDALMMAIATVTLTIFHPGFAFKGRSTSIPITPGHVDPETLPHTDDVEDILDTSDSKQFDIEKEEFQASMKYPISTFKQFMSKIANLFSSKKKAKL.

The Extracellular portion of the chain corresponds to 1–34 (MSNATNNTLGSLLPQLEAAANSNSLYGGMVPNLR). 2 N-linked (GlcNAc...) asparagine glycosylation sites follow: asparagine 3 and asparagine 6. A helical transmembrane segment spans residues 35–55 (FNITMIVIWGILLTIHVVQLL). Over 56–57 (MR) the chain is Cytoplasmic. Residues 58 to 78 (QYWFSIAFICTGILEVLGYIG) traverse the membrane as a helical segment. Residues 79–90 (RTWSHSNVADMD) lie on the Extracellular side of the membrane. The chain crosses the membrane as a helical span at residues 91–111 (AFLLNMICLTIAPVFTMGGIY). Residues 112-135 (YQLAKLIEVYGHRFSLLPSPMAYS) are Cytoplasmic-facing. Residues 136–156 (FIFICSDIVSLVVQAVGGGLC) traverse the membrane as a helical segment. Topologically, residues 157 to 171 (GVAVTDGTSTTTGNH) are extracellular. A helical membrane pass occupies residues 172-192 (VFIAGLAIQVASMAIFLMLWF). The Cytoplasmic segment spans residues 193 to 241 (HFLFRIYISVRWEHINSRPISLSLLKISQTEVDYLYREKFHFLRLEPKR). A helical membrane pass occupies residues 242-262 (WVFHYFNLAMTVAVLTIFTRC). Residues 263-281 (CYRLAELVVGWDGYLITHE) lie on the Extracellular side of the membrane. The helical transmembrane segment at 282-302 (WYFIILDALMMAIATVTLTIF) threads the bilayer. The Cytoplasmic portion of the chain corresponds to 303–382 (HPGFAFKGRS…LFSSKKKAKL (80 aa)).

This sequence belongs to the lipid-translocating exporter (LTE) (TC 9.A.26.1) family.

Its subcellular location is the cell membrane. In terms of biological role, catalyzes the ATP-dependent translocation of sphingoid long-chain bases (LCBs) from the cytoplasmic site toward the extracytoplasmic side of the membrane (flip-flop). Involved in the establishment of the functional lipid asymmetry of the plasma membrane. Regulates intracellular levels of LCBs, sphingolipid precursors that are growth inhibitory at increased levels. In Saccharomyces cerevisiae (strain Lalvin EC1118 / Prise de mousse) (Baker's yeast), this protein is Sphingoid long-chain base transporter RSB1 (RSB1).